A 287-amino-acid chain; its full sequence is Thiazole synthase (287 aa).

The Schiff-base intermediate with DXP role is filled by Lys111. 1-deoxy-D-xylulose 5-phosphate-binding positions include Gly172, 203–204 (AG), and 225–226 (NT). The disordered stretch occupies residues 268-287 (PQEGVISTRPYGSQADEIGS).

This sequence belongs to the ThiG family. In terms of assembly, homotetramer. Forms heterodimers with either ThiH or ThiS.

The protein localises to the cytoplasm. The catalysed reaction is [ThiS sulfur-carrier protein]-C-terminal-Gly-aminoethanethioate + 2-iminoacetate + 1-deoxy-D-xylulose 5-phosphate = [ThiS sulfur-carrier protein]-C-terminal Gly-Gly + 2-[(2R,5Z)-2-carboxy-4-methylthiazol-5(2H)-ylidene]ethyl phosphate + 2 H2O + H(+). It participates in cofactor biosynthesis; thiamine diphosphate biosynthesis. In terms of biological role, catalyzes the rearrangement of 1-deoxy-D-xylulose 5-phosphate (DXP) to produce the thiazole phosphate moiety of thiamine. Sulfur is provided by the thiocarboxylate moiety of the carrier protein ThiS. In vitro, sulfur can be provided by H(2)S. In Rhodopirellula baltica (strain DSM 10527 / NCIMB 13988 / SH1), this protein is Thiazole synthase.